A 278-amino-acid chain; its full sequence is MGRKVHPIGFRLGIIKDWSAKWHASDKNFAECLTEDLKLRKAISKKYVDAAISQVDIERQSNKVTVSVRTARPGIVIGRGGQRVDEMRHFLEDLIGKKVQLNIVEISQAELDAFLVARSVAEQIERRVAYRRAMKQAIFRSMQAGAKGIKICASGRLGGVEIARREVMHEGRVPLHTLRADIDYGCTRAHTALGDVGIKVWVYRGDILPEAKEKSESAVTEMAAVMADAPAAVVTETKVADIAAKPKRVVKKAEAEIPAEEKPKRVVKKAENITKEEE.

The KH type-2 domain maps to 39–107 (LRKAISKKYV…KVQLNIVEIS (69 aa)). The segment at 255–278 (AEIPAEEKPKRVVKKAENITKEEE) is disordered.

This sequence belongs to the universal ribosomal protein uS3 family. Part of the 30S ribosomal subunit. Forms a tight complex with proteins S10 and S14.

In terms of biological role, binds the lower part of the 30S subunit head. Binds mRNA in the 70S ribosome, positioning it for translation. This Dehalococcoides mccartyi (strain ATCC BAA-2100 / JCM 16839 / KCTC 5957 / BAV1) protein is Small ribosomal subunit protein uS3.